The primary structure comprises 115 residues: MARVKNGIVHVARRKRLLKKTKGFWGTKKSNYKKAKDTLRKGMMYATRDRKARKRDFRSLWIVRISAALTGMGITYSRFFEGLKKSNIKLNRKILSNLAIEDIETFKKIVYEIKN.

This sequence belongs to the bacterial ribosomal protein bL20 family.

Its function is as follows. Binds directly to 23S ribosomal RNA and is necessary for the in vitro assembly process of the 50S ribosomal subunit. It is not involved in the protein synthesizing functions of that subunit. The sequence is that of Large ribosomal subunit protein bL20 from Borrelia hermsii (strain HS1 / DAH).